Reading from the N-terminus, the 549-residue chain is Cilia- and flagella-associated protein 45 (549 aa).

Residues 1–29 (MPLSPAGVLSSTSTASNRSRNRPRYRTKA) are disordered. 3 coiled-coil regions span residues 119–232 (REEL…MMEV), 259–393 (IVEQ…KRNQ), and 434–522 (AVQV…KIEE). Residues 388 to 416 (RAKRNQEVADREWRRKEKENAQKKMETEA) are disordered.

This sequence belongs to the CFAP45 family. As to quaternary structure, microtubule inner protein component of sperm flagellar doublet microtubules. Interacts with AK8; dimerization with AK8 may create a cavity at the interface of the dimer that can accommodate AMP. Interacts with CFAP52. Interacts with ENKUR. Directly interacts with DNALI1. Interacts with DNAH11. Interacts with DNAI1. Expressed in respiratory cells (at protein level).

Its subcellular location is the cytoplasm. The protein localises to the cytoskeleton. It is found in the cilium axoneme. It localises to the flagellum axoneme. The protein resides in the cell projection. Its subcellular location is the cilium. The protein localises to the flagellum. In terms of biological role, microtubule inner protein (MIP) part of the dynein-decorated doublet microtubules (DMTs) in cilia axoneme, which is required for motile cilia beating. It is an AMP-binding protein that may facilitate dynein ATPase-dependent ciliary and flagellar beating via adenine nucleotide homeostasis. May function as a donor of AMP to AK8 and hence promote ADP production. This is Cilia- and flagella-associated protein 45 (CFAP45) from Sus scrofa (Pig).